A 230-amino-acid polypeptide reads, in one-letter code: Lipoprotein-releasing system ATP-binding protein LolD (230 aa).

The ABC transporter domain occupies 6–230 (LQVQAVSKSY…GYLQVPESAQ (225 aa)). 42 to 49 (GTSGSGKS) lines the ATP pocket.

This sequence belongs to the ABC transporter superfamily. Lipoprotein translocase (TC 3.A.1.125) family. As to quaternary structure, the complex is composed of two ATP-binding proteins (LolD) and two transmembrane proteins (LolC and LolE).

The protein resides in the cell inner membrane. In terms of biological role, part of the ABC transporter complex LolCDE involved in the translocation of mature outer membrane-directed lipoproteins, from the inner membrane to the periplasmic chaperone, LolA. Responsible for the formation of the LolA-lipoprotein complex in an ATP-dependent manner. The chain is Lipoprotein-releasing system ATP-binding protein LolD from Shewanella oneidensis (strain ATCC 700550 / JCM 31522 / CIP 106686 / LMG 19005 / NCIMB 14063 / MR-1).